Reading from the N-terminus, the 61-residue chain is Metallothionein-1E (61 aa).

At M1 the chain carries N-acetylmethionine. The interval 1-29 is beta; sequence MDPNCSCATGGSCTCAGSCKCKECKCTSC. A divalent metal cation-binding residues include C5, C7, C13, C15, C19, C21, C24, C26, C29, C33, C34, C36, C37, C41, C44, C48, C50, C57, C59, and C60. Residues 30 to 61 are alpha; the sequence is KKSCCSCCPVGCAKCAQGCVCKGASEKCSCCA.

This sequence belongs to the metallothionein superfamily. Type 1 family. Monomer.

Its function is as follows. Metallothioneins have a high content of cysteine residues that bind various heavy metals; these proteins are transcriptionally regulated by both heavy metals and glucocorticoids. The sequence is that of Metallothionein-1E (MT1E) from Homo sapiens (Human).